Reading from the N-terminus, the 84-residue chain is U1-theraphotoxin-Hs1a (84 aa).

Residues 1 to 22 (MKVTLIAILTCAAVLVLHTTAA) form the signal peptide. Residues 23-48 (EELEESQLMEVGMPDTELAAVDEERL) constitute a propeptide that is removed on maturation. Intrachain disulfides connect Cys51/Cys65, Cys55/Cys76, and Cys70/Cys81.

Belongs to the neurotoxin 12 (Hwtx-2) family. 02 (Hwtx-2) subfamily. As to expression, expressed by the venom gland.

It is found in the secreted. Functionally, blocks neuromuscular transmission. Acts cooperatively to potentiate the activity of huwentoxin-I. Paralyzes locusts and kills mice following intracerebroventricular injection. This Cyriopagopus schmidti (Chinese bird spider) protein is U1-theraphotoxin-Hs1a.